Reading from the N-terminus, the 223-residue chain is Regulator of G-protein signaling 19 (223 aa).

Residues M1–P30 are disordered. The span at P20–A29 shows a compositional bias: low complexity. Phosphoserine occurs at positions 24 and 103. Residues S96–L212 form the RGS domain. S157 bears the Phosphoserine; by MAPK1 and MAPK3 mark. An interaction with GIPC region spans residues L213–A223.

In terms of assembly, interacts with GIPC PDZ domain. Interacts with GNAO1. Fatty acylated. Heavily palmitoylated in the cysteine string motif. Post-translationally, phosphorylated, mainly on serine residues.

The protein localises to the membrane. Inhibits signal transduction by increasing the GTPase activity of G protein alpha subunits thereby driving them into their inactive GDP-bound form. Binds to G-alpha subfamily 1 members, with the order G(i)a3 &gt; G(i)a1 &gt; G(o)a &gt;&gt; G(z)a/G(i)a2. Activity on G(z)-alpha is inhibited by phosphorylation and palmitoylation of the G-protein. In Bos taurus (Bovine), this protein is Regulator of G-protein signaling 19 (RGS19).